Here is a 500-residue protein sequence, read N- to C-terminus: L-arabinose isomerase (500 aa).

Residues E306, E333, H349, and H448 each contribute to the Mn(2+) site.

This sequence belongs to the arabinose isomerase family. It depends on Mn(2+) as a cofactor.

The catalysed reaction is beta-L-arabinopyranose = L-ribulose. The protein operates within carbohydrate degradation; L-arabinose degradation via L-ribulose; D-xylulose 5-phosphate from L-arabinose (bacterial route): step 1/3. Catalyzes the conversion of L-arabinose to L-ribulose. This Cellvibrio japonicus (strain Ueda107) (Pseudomonas fluorescens subsp. cellulosa) protein is L-arabinose isomerase.